The following is a 259-amino-acid chain: Undecaprenyl-diphosphatase 4 (259 aa).

Helical transmembrane passes span 1-21, 39-59, 71-91, 99-119, 133-153, 174-194, 208-228, and 239-259; these read MNWL…FLPI, AGLF…FIYY, FSKL…IGLL, ISKT…FLYM, ITYK…FPAI, AYFS…LQFV, SLIV…SWMI, and FAYY…TDVF.

The protein belongs to the UppP family.

It is found in the cell membrane. It carries out the reaction di-trans,octa-cis-undecaprenyl diphosphate + H2O = di-trans,octa-cis-undecaprenyl phosphate + phosphate + H(+). In terms of biological role, catalyzes the dephosphorylation of undecaprenyl diphosphate (UPP). Confers resistance to bacitracin. The protein is Undecaprenyl-diphosphatase 4 of Bacillus cereus (strain ZK / E33L).